Consider the following 288-residue polypeptide: Small ribosomal subunit protein uS2 (288 aa).

This sequence belongs to the universal ribosomal protein uS2 family. As to quaternary structure, component of the small ribosomal subunit. Mature ribosomes consist of a small (40S) and a large (60S) subunit. The 40S subunit contains about 33 different proteins and 1 molecule of RNA (18S). The 60S subunit contains about 49 different proteins and 3 molecules of RNA (28S, 5.8S and 5S). Interacts with ribosomal protein S21.

Its subcellular location is the cytoplasm. Functionally, required for the assembly and/or stability of the 40S ribosomal subunit. Required for the processing of the 20S rRNA-precursor to mature 18S rRNA in a late step of the maturation of 40S ribosomal subunits. In Aedes aegypti (Yellowfever mosquito), this protein is Small ribosomal subunit protein uS2.